The sequence spans 156 residues: Small ribosomal subunit protein uS7 (156 aa).

It belongs to the universal ribosomal protein uS7 family. As to quaternary structure, part of the 30S ribosomal subunit. Contacts proteins S9 and S11.

In terms of biological role, one of the primary rRNA binding proteins, it binds directly to 16S rRNA where it nucleates assembly of the head domain of the 30S subunit. Is located at the subunit interface close to the decoding center, probably blocks exit of the E-site tRNA. This is Small ribosomal subunit protein uS7 from Carsonella ruddii (strain PV).